The chain runs to 209 residues: Adenylate kinase (209 aa).

10 to 15 lines the ATP pocket; sequence GAGKGT. Residues 30–59 form an NMP region; sequence STGDLFRAAIKEQTDLGKKVKAVIDSGALV. Residues T31, R36, 57–59, 85–88, and Q92 contribute to the AMP site; these read ALV and GFPR. Residues 121–158 form an LID region; the sequence is GRRVCSSCGQSFHIEFVKPKKEGICDSCSGDLMIRPDD. Residue R122 coordinates ATP. 2 residues coordinate Zn(2+): C125 and C128. 131–132 provides a ligand contact to ATP; it reads SF. The Zn(2+) site is built by C145 and C148. AMP is bound by residues R155 and R166. P194 serves as a coordination point for ATP.

The protein belongs to the adenylate kinase family. Monomer.

It localises to the cytoplasm. The catalysed reaction is AMP + ATP = 2 ADP. It functions in the pathway purine metabolism; AMP biosynthesis via salvage pathway; AMP from ADP: step 1/1. Catalyzes the reversible transfer of the terminal phosphate group between ATP and AMP. Plays an important role in cellular energy homeostasis and in adenine nucleotide metabolism. The protein is Adenylate kinase of Treponema denticola (strain ATCC 35405 / DSM 14222 / CIP 103919 / JCM 8153 / KCTC 15104).